The chain runs to 503 residues: SusD-like protein P38 (503 aa).

Positions 1–21 (MKKFKNISITFLILISLGVLN) are cleaved as a signal peptide.

The protein belongs to the SusD family.

The protein resides in the cell outer membrane. Functionally, polysaccharide-binding protein probably involved in ulvan degradation. Ulvan is the main polysaccharide component of the Ulvales (green seaweed) cell wall. It is composed of disaccharide building blocks comprising 3-sulfated rhamnose (Rha3S) linked to D-glucuronic acid (GlcA), L-iduronic acid (IduA), or D-xylose (Xyl). The SusD-like protein may mediate ulvan oligomer-binding before transport in the periplasm for further degradation. This Formosa agariphila (strain DSM 15362 / KCTC 12365 / LMG 23005 / KMM 3901 / M-2Alg 35-1) protein is SusD-like protein P38.